The sequence spans 120 residues: Small ribosomal subunit protein uS12 (120 aa).

D88 carries the 3-methylthioaspartic acid modification.

Belongs to the universal ribosomal protein uS12 family. Part of the 30S ribosomal subunit. Contacts proteins S8 and S17. May interact with IF1 in the 30S initiation complex.

With S4 and S5 plays an important role in translational accuracy. Its function is as follows. Interacts with and stabilizes bases of the 16S rRNA that are involved in tRNA selection in the A site and with the mRNA backbone. Located at the interface of the 30S and 50S subunits, it traverses the body of the 30S subunit contacting proteins on the other side and probably holding the rRNA structure together. The combined cluster of proteins S8, S12 and S17 appears to hold together the shoulder and platform of the 30S subunit. The protein is Small ribosomal subunit protein uS12 of Carsonella ruddii (strain PV).